The sequence spans 272 residues: sn-1 stearoyl-lipid 9-desaturase (272 aa).

2 consecutive transmembrane segments (helical) span residues 11–31 and 39–59; these read INWV…FAFI and AVGV…TLGF. A Histidine box-1 motif is present at residues 60 to 65; that stretch reads HRLVTH. The short motif at 97-101 is the Histidine box-2 element; it reads HRIHH. A helical transmembrane segment spans residues 160–180; the sequence is IALGLLLLYLGGWSFVVWGVF. A Histidine box-3 motif is present at residues 230–234; the sequence is HHAFQ.

Belongs to the fatty acid desaturase type 2 family. The cofactor is Fe(2+).

The protein resides in the membrane. The enzyme catalyses a 1-octadecanoyl 2-acyl-glycerolipid + 2 reduced [2Fe-2S]-[ferredoxin] + O2 + 2 H(+) = a 1-[(9Z)-octadecenoyl]-2-acyl-glycerolipid + 2 oxidized [2Fe-2S]-[ferredoxin] + 2 H2O. The protein operates within lipid metabolism; polyunsaturated fatty acid biosynthesis. Its function is as follows. Desaturase involved in fatty acid biosynthesis. Introduces a double bond at carbon 9 of stearoyl groups (18:0) attached to the sn-1 position of the glycerol moiety of membrane glycerolipids. Does not desaturate palmitic acid (16:0), palmitoleic acid (16:1) and cis-vaccenic acid (18:1). This Anabaena variabilis protein is sn-1 stearoyl-lipid 9-desaturase.